Consider the following 395-residue polypeptide: MPGRSCVALVLLAAAVSCAVAQHAPPWTEDCRKSTYPPSGPTYRGAVPWYTINLDLPPYKRWHELMLDKAPVLKVIVNSLKNMINTFVPSGKIMQVVDEKLPGLLGNFPGPFEEEMKGIAAVTDIPLGEIISFNIFYELFTICTSIVAEDKKGHLIHGRNMDFGVFLGWNINNDTWVITEQLKPLTVNLDFQRNNKTVFKASSFAGYVGMLTGFKPGLFSLTLNERFSINGGYLGILEWILGKKDVMWIGFLTRTVLENSTSYEEAKNLLTKTKILAPAYFILGGNQSGEGCVITRDRKESLDVYELDAKQGRWYVVQTNYDRWKHPFFLDDRRTPAKMCLNRTSQENISFETMYDVLSTKPVLNKLTVYTTLIDVTKGQFETYLRDCPDPCIGW.

Residues 1-21 form the signal peptide; sequence MPGRSCVALVLLAAAVSCAVA. The cysteines at positions 31 and 340 are disulfide-linked. Residue C143 is the Nucleophile of the active site. 6 N-linked (GlcNAc...) asparagine glycosylation sites follow: N173, N195, N259, N286, N342, and N348. C388 and C392 form a disulfide bridge.

This sequence belongs to the acid ceramidase family. Heterodimer; disulfide-linked. The heterodimer is composed of the disulfide-linked alpha and beta chains produced by autocatalytic cleavage of the precursor. Isoform 2: May interact with NR5A1 in the nucleus; the direct interaction would negatively regulate NR5A1 transcriptional activity. N-glycosylated. Post-translationally, proteolytically cleaved into two chains alpha and beta that remain associated via a disulfide bond. Cleavage gives rise to a conformation change that activates the enzyme. The same catalytic Cys residue mediates the autoproteolytic cleavage and subsequent hydrolysis of lipid substrates. The beta chain may undergo an additional C-terminal processing. In terms of tissue distribution, broadly expressed with higher expression in heart.

It is found in the lysosome. Its subcellular location is the secreted. The protein resides in the nucleus. It localises to the cytoplasm. The catalysed reaction is an N-acylsphing-4-enine + H2O = sphing-4-enine + a fatty acid. It catalyses the reaction a beta-D-glucosyl-(1&lt;-&gt;1')-N-acylsphing-4-enine + H2O = beta-D-glucosyl-(1&lt;-&gt;1)-sphing-4-enine + a fatty acid. It carries out the reaction a globoside Gb3Cer + H2O = a lysoGb3 + a fatty acid. The enzyme catalyses a globoside Gb3Cer (d18:1(4E)) + H2O = a lysoGb3(d18:1(4E)) + a fatty acid. The catalysed reaction is N-dodecanoylsphing-4-enine + H2O = dodecanoate + sphing-4-enine. It catalyses the reaction N-tetradecanoylsphing-4-enine + H2O = tetradecanoate + sphing-4-enine. It carries out the reaction N-hexadecanoylsphing-4-enine + H2O = sphing-4-enine + hexadecanoate. The enzyme catalyses N-octadecanoylsphing-4-enine + H2O = sphing-4-enine + octadecanoate. The catalysed reaction is N-dodecanoyl-(4R)-hydroxysphinganine + H2O = (4R)-hydroxysphinganine + dodecanoate. It catalyses the reaction N-(dodecanoyl)-sphinganine + H2O = dodecanoate + sphinganine. It carries out the reaction N-(acetyl)-sphing-4-enine + H2O = sphing-4-enine + acetate. The enzyme catalyses N-(hexanoyl)sphing-4-enine + H2O = hexanoate + sphing-4-enine. The catalysed reaction is N-octanoylsphing-4-enine + H2O = octanoate + sphing-4-enine. It catalyses the reaction N-(9Z-octadecenoyl)-sphing-4-enine + H2O = sphing-4-enine + (9Z)-octadecenoate. It carries out the reaction N-dodecanoylethanolamine + H2O = dodecanoate + ethanolamine. The protein operates within lipid metabolism; sphingolipid metabolism. With respect to regulation, activated by Ca(2+), Mg(2+) and Na(+) cations. Inhibited by Zn(2+). Phosphatidylserine and phosphatidic acid stimulate while cardiolipin, phosphatidylcholine, lysophosphatidylcholine, phosphatidylethanolamine, phosphatidylinositol and sphingomyelin inhibit the reverse ceramide synthase activity. Phosphatidic acid, phosphatidylinositol and C16-ceramide inhibit the ceramidase/hydrolase activity. Lysosomal ceramidase that hydrolyzes sphingolipid ceramides into sphingosine and free fatty acids at acidic pH. Ceramides, sphingosine, and its phosphorylated form sphingosine-1-phosphate are bioactive lipids that mediate cellular signaling pathways regulating several biological processes including cell proliferation, apoptosis and differentiation. Has a higher catalytic efficiency towards C12-ceramides versus other ceramides. Also catalyzes the reverse reaction allowing the synthesis of ceramides from fatty acids and sphingosine. For the reverse synthetic reaction, the natural sphingosine D-erythro isomer is more efficiently utilized as a substrate compared to D-erythro-dihydrosphingosine and D-erythro-phytosphingosine, while the fatty acids with chain lengths of 12 or 14 carbons are the most efficiently used. Also has an N-acylethanolamine hydrolase activity. By regulating the levels of ceramides, sphingosine and sphingosine-1-phosphate in the epidermis, mediates the calcium-induced differentiation of epidermal keratinocytes. Also indirectly regulates tumor necrosis factor/TNF-induced apoptosis. By regulating the intracellular balance between ceramides and sphingosine, in adrenocortical cells, probably also acts as a regulator of steroidogenesis. Functionally, may directly regulate steroidogenesis by binding the nuclear receptor NR5A1 and negatively regulating its transcriptional activity. This is Acid ceramidase from Homo sapiens (Human).